Reading from the N-terminus, the 265-residue chain is Glutamate racemase (265 aa).

Residues 12 to 13 and 44 to 45 contribute to the substrate site; these read DS and YG. Cys-75 serves as the catalytic Proton donor/acceptor. 76–77 is a substrate binding site; sequence NT. The active-site Proton donor/acceptor is Cys-186. 187 to 188 is a substrate binding site; that stretch reads TH.

This sequence belongs to the aspartate/glutamate racemases family.

The enzyme catalyses L-glutamate = D-glutamate. It participates in cell wall biogenesis; peptidoglycan biosynthesis. In terms of biological role, provides the (R)-glutamate required for cell wall biosynthesis. The polypeptide is Glutamate racemase (Pseudomonas putida (strain ATCC 700007 / DSM 6899 / JCM 31910 / BCRC 17059 / LMG 24140 / F1)).